The sequence spans 455 residues: ATP-dependent protease ATPase subunit HslU (455 aa).

Residues I19 and 61 to 66 (GVGKTE) contribute to the ATP site. The interval 144–163 (ESKVGFANEPAEDAASKKEK) is disordered. Positions 268, 333, and 405 each coordinate ATP.

The protein belongs to the ClpX chaperone family. HslU subfamily. In terms of assembly, a double ring-shaped homohexamer of HslV is capped on each side by a ring-shaped HslU homohexamer. The assembly of the HslU/HslV complex is dependent on binding of ATP.

The protein localises to the cytoplasm. Functionally, ATPase subunit of a proteasome-like degradation complex; this subunit has chaperone activity. The binding of ATP and its subsequent hydrolysis by HslU are essential for unfolding of protein substrates subsequently hydrolyzed by HslV. HslU recognizes the N-terminal part of its protein substrates and unfolds these before they are guided to HslV for hydrolysis. The sequence is that of ATP-dependent protease ATPase subunit HslU from Francisella tularensis subsp. holarctica (strain FTNF002-00 / FTA).